The chain runs to 964 residues: Glycine dehydrogenase (decarboxylating) (964 aa).

Lys-711 bears the N6-(pyridoxal phosphate)lysine mark.

It belongs to the GcvP family. In terms of assembly, the glycine cleavage system is composed of four proteins: P, T, L and H. Pyridoxal 5'-phosphate is required as a cofactor.

The catalysed reaction is N(6)-[(R)-lipoyl]-L-lysyl-[glycine-cleavage complex H protein] + glycine + H(+) = N(6)-[(R)-S(8)-aminomethyldihydrolipoyl]-L-lysyl-[glycine-cleavage complex H protein] + CO2. In terms of biological role, the glycine cleavage system catalyzes the degradation of glycine. The P protein binds the alpha-amino group of glycine through its pyridoxal phosphate cofactor; CO(2) is released and the remaining methylamine moiety is then transferred to the lipoamide cofactor of the H protein. The sequence is that of Glycine dehydrogenase (decarboxylating) from Prochlorococcus marinus (strain SARG / CCMP1375 / SS120).